We begin with the raw amino-acid sequence, 123 residues long: Ribosome-binding factor A (123 aa).

It belongs to the RbfA family. In terms of assembly, monomer. Binds 30S ribosomal subunits, but not 50S ribosomal subunits or 70S ribosomes.

It is found in the cytoplasm. One of several proteins that assist in the late maturation steps of the functional core of the 30S ribosomal subunit. Associates with free 30S ribosomal subunits (but not with 30S subunits that are part of 70S ribosomes or polysomes). Required for efficient processing of 16S rRNA. May interact with the 5'-terminal helix region of 16S rRNA. In Legionella pneumophila (strain Paris), this protein is Ribosome-binding factor A.